Here is an 88-residue protein sequence, read N- to C-terminus: Small ribosomal subunit protein uS17 (88 aa).

Belongs to the universal ribosomal protein uS17 family. As to quaternary structure, part of the 30S ribosomal subunit.

Functionally, one of the primary rRNA binding proteins, it binds specifically to the 5'-end of 16S ribosomal RNA. This chain is Small ribosomal subunit protein uS17, found in Pseudomonas savastanoi pv. phaseolicola (strain 1448A / Race 6) (Pseudomonas syringae pv. phaseolicola (strain 1448A / Race 6)).